Here is a 251-residue protein sequence, read N- to C-terminus: Ditrans,polycis-undecaprenyl-diphosphate synthase ((2E,6E)-farnesyl-diphosphate specific) (251 aa).

Residue Asp-21 is part of the active site. A Mg(2+)-binding site is contributed by Asp-21. Substrate-binding positions include 22–25 (GNNR), Trp-26, His-38, and 66–68 (SSE). Residue Asn-69 is the Proton acceptor of the active site. Residues Trp-70, Arg-72, Arg-189, and 195–197 (RIS) contribute to the substrate site. Residue Glu-208 participates in Mg(2+) binding.

This sequence belongs to the UPP synthase family. As to quaternary structure, homodimer. It depends on Mg(2+) as a cofactor.

The catalysed reaction is 8 isopentenyl diphosphate + (2E,6E)-farnesyl diphosphate = di-trans,octa-cis-undecaprenyl diphosphate + 8 diphosphate. In terms of biological role, catalyzes the sequential condensation of isopentenyl diphosphate (IPP) with (2E,6E)-farnesyl diphosphate (E,E-FPP) to yield (2Z,6Z,10Z,14Z,18Z,22Z,26Z,30Z,34E,38E)-undecaprenyl diphosphate (di-trans,octa-cis-UPP). UPP is the precursor of glycosyl carrier lipid in the biosynthesis of bacterial cell wall polysaccharide components such as peptidoglycan and lipopolysaccharide. The chain is Ditrans,polycis-undecaprenyl-diphosphate synthase ((2E,6E)-farnesyl-diphosphate specific) from Pseudomonas putida (strain ATCC 47054 / DSM 6125 / CFBP 8728 / NCIMB 11950 / KT2440).